A 215-amino-acid polypeptide reads, in one-letter code: Peroxiredoxin 1 (215 aa).

One can recognise a Thioredoxin domain in the interval 2–157 (KLLGEKFPSM…ILRALKALQT (156 aa)). C44 serves as the catalytic Cysteine sulfenic acid (-SOH) intermediate. Residue R120 coordinates substrate.

Belongs to the peroxiredoxin family. Prx6 subfamily. As to quaternary structure, homodecamer. Pentamer of dimers that assemble into a ring structure.

It is found in the cytoplasm. It catalyses the reaction a hydroperoxide + [thioredoxin]-dithiol = an alcohol + [thioredoxin]-disulfide + H2O. Functionally, thiol-specific peroxidase that catalyzes the reduction of hydrogen peroxide and organic hydroperoxides to water and alcohols, respectively. Plays a role in cell protection against oxidative stress by detoxifying peroxides. This chain is Peroxiredoxin 1, found in Caldanaerobacter subterraneus subsp. tengcongensis (strain DSM 15242 / JCM 11007 / NBRC 100824 / MB4) (Thermoanaerobacter tengcongensis).